A 259-amino-acid chain; its full sequence is Global transcriptional regulator CodY (259 aa).

Residues 1–155 (MNLLEKTRKI…GATVVGMEIL (155 aa)) form a GAF domain region. The H-T-H motif DNA-binding region spans 203-222 (ASKIADRVGITRSVIVNALR). Phosphoserine is present on Ser215.

This sequence belongs to the CodY family.

It localises to the cytoplasm. DNA-binding global transcriptional regulator which is involved in the adaptive response to starvation and acts by directly or indirectly controlling the expression of numerous genes in response to nutrient availability. During rapid exponential growth, CodY is highly active and represses genes whose products allow adaptation to nutrient depletion. This is Global transcriptional regulator CodY from Geobacillus thermodenitrificans (strain NG80-2).